A 189-amino-acid chain; its full sequence is Glucose-6-phosphate isomerase (189 aa).

4 residues coordinate Fe cation: H88, H90, E97, and H136.

This sequence belongs to the archaeal-type GPI family. In terms of assembly, homodimer. The cofactor is Fe cation.

Its subcellular location is the cytoplasm. It carries out the reaction alpha-D-glucose 6-phosphate = beta-D-fructose 6-phosphate. Its pathway is carbohydrate degradation; glycolysis; D-glyceraldehyde 3-phosphate and glycerone phosphate from D-glucose: step 2/4. This is Glucose-6-phosphate isomerase (pgiA) from Pyrococcus abyssi (strain GE5 / Orsay).